Here is a 111-residue protein sequence, read N- to C-terminus: Large ribosomal subunit protein uL23 (111 aa).

This sequence belongs to the universal ribosomal protein uL23 family. Part of the 50S ribosomal subunit. Contacts protein L29, and trigger factor when it is bound to the ribosome.

In terms of biological role, one of the early assembly proteins it binds 23S rRNA. One of the proteins that surrounds the polypeptide exit tunnel on the outside of the ribosome. Forms the main docking site for trigger factor binding to the ribosome. This is Large ribosomal subunit protein uL23 from Chlamydia abortus (strain DSM 27085 / S26/3) (Chlamydophila abortus).